The primary structure comprises 1012 residues: Ubiquitin-like modifier-activating enzyme 7 (1012 aa).

One copy of the 1-1 repeat lies at 23-159; that stretch reads GSPAMQRIQG…DTRGLVGQLF (137 aa). The segment at 23–575 is 2 approximate repeats; it reads GSPAMQRIQG…GTWGSATVFM (553 aa). Ser266 carries the phosphoserine modification. Residues 423–575 form a 1-2 repeat; the sequence is GAGFQEKLRR…GTWGSATVFM (153 aa). Position 442-471 (442-471) interacts with ATP; it reads AIGCELLKVFALVGLGAGNSGGLTVVDMDH. Cys599 acts as the Glycyl thioester intermediate in catalysis.

The protein belongs to the ubiquitin-activating E1 family. (Microbial infection) Interacts with human cytomegalovirus proteins NEC2/UL50 and UL26; these interactions inhibit ISGylation and cause proteasomal degradation of UBA7. In terms of assembly, (Microbial infection) Interacts with rotavirus non-structural protein 5 (NSP5); this interaction promotes UBA7 proteasomal degradation. As to quaternary structure, monomer. Binds and is involved in the conjugation of G1P2/ISG15. In terms of processing, ISGylated. Post-translationally, ubiquitinated by RNF170. Expressed in a variety of normal and tumor cell types, but is reduced in lung cancer cell lines.

Its subcellular location is the cytoplasm. It localises to the nucleus. It functions in the pathway protein modification; protein ubiquitination. In terms of biological role, E1-activating enzyme that catalyzes the covalent conjugation of the ubiquitin-like protein product of ISG15 to additional interferon stimulated proteins (ISGs) as well as other cellular proteins such as P53 in a process termed protein ISGylation. Plays an essential role in antiviral immunity together with ISG15 by restricting the replication of many viruses including rabies virus, influenza virus, sindbis virus, rotavirus or human cytomegalovirus. For example, ISG15 modification of influenza A protein NS1 disrupts the association of the NS1 with importin-alpha leading to NS1 nuclear import inhibition. ISGylation of human cytomegalovirs protein UL26 regulates its stability and inhibits its activities to suppress NF-kappa-B signaling. In Homo sapiens (Human), this protein is Ubiquitin-like modifier-activating enzyme 7.